Consider the following 110-residue polypeptide: T cell receptor alpha variable 39 (110 aa).

A signal peptide spans 1–18; the sequence is MKKLLAMILWLQLDRLSG. The region spanning 19-110 is the Ig-like domain; the sequence is ELKVEQNPLF…LSATYFCAVD (92 aa). N-linked (GlcNAc...) asparagine glycosylation is found at asparagine 36 and asparagine 42. Cysteine 41 and cysteine 107 form a disulfide bridge.

In terms of assembly, alpha-beta TR is a heterodimer composed of an alpha and beta chain; disulfide-linked. The alpha-beta TR is associated with the transmembrane signaling CD3 coreceptor proteins to form the TR-CD3 (TcR or TCR). The assembly of alpha-beta TR heterodimers with CD3 occurs in the endoplasmic reticulum where a single alpha-beta TR heterodimer associates with one CD3D-CD3E heterodimer, one CD3G-CD3E heterodimer and one CD247 homodimer forming a stable octameric structure. CD3D-CD3E and CD3G-CD3E heterodimers preferentially associate with TR alpha and TR beta chains, respectively. The association of the CD247 homodimer is the last step of TcR assembly in the endoplasmic reticulum and is required for transport to the cell surface.

The protein localises to the cell membrane. Functionally, v region of the variable domain of T cell receptor (TR) alpha chain that participates in the antigen recognition. Alpha-beta T cell receptors are antigen specific receptors which are essential to the immune response and are present on the cell surface of T lymphocytes. Recognize peptide-major histocompatibility (MH) (pMH) complexes that are displayed by antigen presenting cells (APC), a prerequisite for efficient T cell adaptive immunity against pathogens. Binding of alpha-beta TR to pMH complex initiates TR-CD3 clustering on the cell surface and intracellular activation of LCK that phosphorylates the ITAM motifs of CD3G, CD3D, CD3E and CD247 enabling the recruitment of ZAP70. In turn ZAP70 phosphorylates LAT, which recruits numerous signaling molecules to form the LAT signalosome. The LAT signalosome propagates signal branching to three major signaling pathways, the calcium, the mitogen-activated protein kinase (MAPK) kinase and the nuclear factor NF-kappa-B (NF-kB) pathways, leading to the mobilization of transcription factors that are critical for gene expression and essential for T cell growth and differentiation. The T cell repertoire is generated in the thymus, by V-(D)-J rearrangement. This repertoire is then shaped by intrathymic selection events to generate a peripheral T cell pool of self-MH restricted, non-autoaggressive T cells. Post-thymic interaction of alpha-beta TR with the pMH complexes shapes TR structural and functional avidity. This chain is T cell receptor alpha variable 39, found in Homo sapiens (Human).